A 303-amino-acid chain; its full sequence is Golgi to ER traffic protein 2 (303 aa).

Residues 1–168 (MSEQPLSQDE…NAYNIYQQRL (168 aa)) are Cytoplasmic-facing. The tract at residues 19-86 (RQAKMARGKA…DPEDDPDLMD (68 aa)) is disordered. Residues 31 to 48 (RLNNILSQGSSVKGTTDP) show a composition bias toward polar residues. Residues 169–189 (WKFRFSIIRFAAVLTNFFYHY) form a helical membrane-spanning segment. The Lumenal segment spans residues 190-216 (LTIQDYSFTSSPHFYVRALAPHPAVNS). Residues 217–236 (FITWFSTCEVAILASFYLIT) form a helical membrane-spanning segment. Over 237 to 280 (SKNNIYANASDGNLLLKGISMGAMVLPQLRAYQPLVIRLAHYWE) the chain is Cytoplasmic. Residues 281–301 (VFSMLLGDIFLVVVLFGLVSI) form a helical membrane-spanning segment. The Lumenal portion of the chain corresponds to 302–303 (YN).

Belongs to the GET2 family. Component of the Golgi to ER traffic (GET) complex, which is composed of GET1, GET2 and GET3. Within the complex, GET1 and GET2 form a heterotetramer which is stabilized by phosphatidylinositol binding and which binds to the GET3 homodimer.

The protein localises to the endoplasmic reticulum membrane. It localises to the golgi apparatus membrane. Functionally, required for the post-translational delivery of tail-anchored (TA) proteins to the endoplasmic reticulum. Together with GET1, acts as a membrane receptor for soluble GET3, which recognizes and selectively binds the transmembrane domain of TA proteins in the cytosol. The GET complex cooperates with the HDEL receptor ERD2 to mediate the ATP-dependent retrieval of resident ER proteins that contain a C-terminal H-D-E-L retention signal from the Golgi to the ER. This Debaryomyces hansenii (strain ATCC 36239 / CBS 767 / BCRC 21394 / JCM 1990 / NBRC 0083 / IGC 2968) (Yeast) protein is Golgi to ER traffic protein 2.